We begin with the raw amino-acid sequence, 334 residues long: Fructose-1,6-bisphosphatase class 1 (334 aa).

Mg(2+)-binding residues include glutamate 92, aspartate 114, leucine 116, and aspartate 117. Substrate is bound by residues 117–120 and asparagine 209; that span reads DGSS. A Mg(2+)-binding site is contributed by glutamate 281.

This sequence belongs to the FBPase class 1 family. In terms of assembly, homotetramer. The cofactor is Mg(2+).

The protein resides in the cytoplasm. It carries out the reaction beta-D-fructose 1,6-bisphosphate + H2O = beta-D-fructose 6-phosphate + phosphate. It participates in carbohydrate biosynthesis; gluconeogenesis. This Nitrosomonas europaea (strain ATCC 19718 / CIP 103999 / KCTC 2705 / NBRC 14298) protein is Fructose-1,6-bisphosphatase class 1.